The following is a 189-amino-acid chain: 6,7-dimethyl-8-ribityllumazine synthase (189 aa).

5-amino-6-(D-ribitylamino)uracil-binding positions include Trp-31, 65 to 67 (SFE), and 89 to 91 (CVI). 94–95 (ET) is a binding site for (2S)-2-hydroxy-3-oxobutyl phosphate. His-97 acts as the Proton donor in catalysis. Phe-122 contributes to the 5-amino-6-(D-ribitylamino)uracil binding site. A (2S)-2-hydroxy-3-oxobutyl phosphate-binding site is contributed by Arg-136.

It belongs to the DMRL synthase family.

It carries out the reaction (2S)-2-hydroxy-3-oxobutyl phosphate + 5-amino-6-(D-ribitylamino)uracil = 6,7-dimethyl-8-(1-D-ribityl)lumazine + phosphate + 2 H2O + H(+). The protein operates within cofactor biosynthesis; riboflavin biosynthesis; riboflavin from 2-hydroxy-3-oxobutyl phosphate and 5-amino-6-(D-ribitylamino)uracil: step 1/2. In terms of biological role, catalyzes the formation of 6,7-dimethyl-8-ribityllumazine by condensation of 5-amino-6-(D-ribitylamino)uracil with 3,4-dihydroxy-2-butanone 4-phosphate. This is the penultimate step in the biosynthesis of riboflavin. The protein is 6,7-dimethyl-8-ribityllumazine synthase of Flavobacterium psychrophilum (strain ATCC 49511 / DSM 21280 / CIP 103535 / JIP02/86).